The sequence spans 1253 residues: Cytoplasmic FMR1-interacting protein 1 (1253 aa).

Phosphoserine is present on serine 583. Phosphothreonine is present on threonine 1234.

This sequence belongs to the CYFIP family. In terms of assembly, component of the WAVE1 complex composed of ABI2, CYFIP1 or CYFIP2, BRK1, NCKAP1 and WASF1/WAVE1. Within the complex, a heterodimer containing NCKAP1 and CYFIP1 interacts with a heterotrimer formed by WAVE1, ABI2 and BRK1. Component of the CYFIP1-EIF4E-FMR1 complex which is composed of CYFIP, EIF4E and FMR1. Interacts with FMR1 but does not bind to related proteins FXR1 or FXR2. Interaction with EIF4E stimulates FMR1 binding. Component of the WAVE2 complex composed of ABI1, CYFIP1/SRA1, NCKAP1/NAP1 (NCKAP1l/HEM1 in hematopoietic cells) and WASF2/WAVE2. Interacts with the active GTP-bound form of RAC1. Interacts through its C-terminus with the C-terminus of DPYSL2/CRMP2 which is necessary for DPYSL2-induced axon outgrowth. Interacts with NYAP1, NYAP2 and MYO16. Interacts with TMEM108 (via N-terminus); the interaction associates TMEM108 with the WAVE1 complex.

The protein resides in the cytoplasm. It is found in the perinuclear region. The protein localises to the cell projection. It localises to the lamellipodium. Its subcellular location is the ruffle. The protein resides in the synapse. It is found in the synaptosome. Component of the CYFIP1-EIF4E-FMR1 complex which binds to the mRNA cap and mediates translational repression. In the CYFIP1-EIF4E-FMR1 complex this subunit is an adapter between EIF4E and FMR1. Promotes the translation repression activity of FMR1 in brain probably by mediating its association with EIF4E and mRNA. Regulates formation of membrane ruffles and lamellipodia. Plays a role in axon outgrowth. Binds to F-actin but not to RNA. Part of the WAVE complex that regulates actin filament reorganization via its interaction with the Arp2/3 complex. Actin remodeling activity is regulated by RAC1. Regulator of epithelial morphogenesis. As component of the WAVE1 complex, required for BDNF-NTRK2 endocytic trafficking and signaling from early endosomes. May act as an invasion suppressor in cancers. This chain is Cytoplasmic FMR1-interacting protein 1, found in Homo sapiens (Human).